Here is a 1220-residue protein sequence, read N- to C-terminus: MGDMANNSVAYGGVKNSLKEANHDGDFGITLADVRALMELRSTDALRKIQESYGDVYGICTRLKTSPVEGLSGNPADIERREAVFGKNFIPPKKPKTFLQLVWEALQDVTLIILEIAAIVSLGLSFYQPPEGDNALCGEVSVGEEEGEGETGWIEGAAILLSVVCVVLVTAFNDWSKEKQFRGLQSRIEQEQKFTVIRGGQVIQIPVADITVGDIAQVKYGDLLPADGILIQGNDLKIDESSLTGESDHVKKSLDKDPLLLSGTHVMEGSGRMVVTAVGINSQTGIIFTLLGAGGEEEEKKDEKKKEKKNKKQDGAIENRNKAKAQDGAAMEMQPLKSEEGGDGDEKDKKKANLPKKEKSVLQGKLTKLAVQIGKAGLLMSAITVIILVLYFVIDTFWVQKRPWLAECTPIYIQYFVKFFIIGVTVLVVAVPEGLPLAVTISLAYSVKKMMKDNNLVRHLDACETMGNATAICSDKTGTLTMNRMTVVQAYINEKHYKKIPEPEAIPPNILSYLVTGISVNCAYTSKILPPEKEGGLPRHVGNKTECALLGLLLDLKRDYQDVRNEIPEEALYKVYTFNSVRKSMSTVLKNSDGSYRIFSKGASEIILKKCFKILSANGEAKVFRPRDRDDIVKTVIEPMASEGLRTICLAFRDFPAGEPEPEWDNENDIVTGLTCIAVVGIEDPVRPEVPDAIKKCQRAGITVRMVTGDNINTARAIATKCGILHPGEDFLCLEGKDFNRRIRNEKGEIEQERIDKIWPKLRVLARSSPTDKHTLVKGIIDSTVSDQRQVVAVTGDGTNDGPALKKADVGFAMGIAGTDVAKEASDIILTDDNFTSIVKAVMWGRNVYDSISKFLQFQLTVNVVAVIVAFTGACITQDSPLKAVQMLWVNLIMDTLASLALATEPPTESLLLRKPYGRNKPLISRTMMKNILGHAFYQLVVVFTLLFAGEKFFDIDSGRNAPLHAPPSEHYTIVFNTFVLMQLFNEINARKIHGERNVFEGIFNNAIFCTIVLGTFVVQIIIVQFGGKPFSCSELSIEQWLWSIFLGMGTLLWGQLISTIPTSRLKFLKEAGHGTQKEEIPEEELAEDVEEIDHAERELRRGQILWFRGLNRIQTQIRVVNAFRSSLYEGLEKPESRSSIHNFMTHPEFRIEDSEPHIPLIDDTDAEDDAPTKRNCSPPPSPNKNNNAVDSGIYLTIEMNKSATSSSPGSPLHSLETSL.

N-acetylglycine is present on Gly-2. The Cytoplasmic segment spans residues 2-105 (GDMANNSVAY…KTFLQLVWEA (104 aa)). Residues Ser-8 and Ser-17 each carry the phosphoserine modification. The chain crosses the membrane as a helical span at residues 106–126 (LQDVTLIILEIAAIVSLGLSF). Over 127–154 (YQPPEGDNALCGEVSVGEEEGEGETGWI) the chain is Extracellular. The helical transmembrane segment at 155–175 (EGAAILLSVVCVVLVTAFNDW) threads the bilayer. The Cytoplasmic segment spans residues 176–366 (SKEKQFRGLQ…KEKSVLQGKL (191 aa)). Residues 297–356 (EEEKKDEKKKEKKNKKQDGAIENRNKAKAQDGAAMEMQPLKSEEGGDGDEKDKKKANLPK) form a disordered region. Basic and acidic residues-rich tracts occupy residues 312–325 (KQDG…KAKA) and 337–356 (KSEE…NLPK). Ser-338 bears the Phosphoserine mark. The helical transmembrane segment at 367-386 (TKLAVQIGKAGLLMSAITVI) threads the bilayer. Topologically, residues 387–418 (ILVLYFVIDTFWVQKRPWLAECTPIYIQYFVK) are extracellular. A helical membrane pass occupies residues 419–439 (FFIIGVTVLVVAVPEGLPLAV). At 440-855 (TISLAYSVKK…RNVYDSISKF (416 aa)) the chain is on the cytoplasmic side. Asp-475 acts as the 4-aspartylphosphate intermediate in catalysis. Mg(2+) is bound by residues Asp-475, Thr-477, Asp-797, and Asp-801. A helical transmembrane segment spans residues 856 to 876 (LQFQLTVNVVAVIVAFTGACI). Residues 877–882 (TQDSPL) are Extracellular-facing. A helical transmembrane segment spans residues 883–903 (KAVQMLWVNLIMDTLASLALA). The Cytoplasmic portion of the chain corresponds to 904–927 (TEPPTESLLLRKPYGRNKPLISRT). Residues 928–948 (MMKNILGHAFYQLVVVFTLLF) form a helical membrane-spanning segment. Residues 949 to 971 (AGEKFFDIDSGRNAPLHAPPSEH) lie on the Extracellular side of the membrane. Residues 972-991 (YTIVFNTFVLMQLFNEINAR) form a helical membrane-spanning segment. The Cytoplasmic segment spans residues 992 to 1005 (KIHGERNVFEGIFN). A helical membrane pass occupies residues 1006 to 1027 (NAIFCTIVLGTFVVQIIIVQFG). The Extracellular portion of the chain corresponds to 1028–1039 (GKPFSCSELSIE). The chain crosses the membrane as a helical span at residues 1040 to 1060 (QWLWSIFLGMGTLLWGQLIST). Topologically, residues 1061 to 1220 (IPTSRLKFLK…SPLHSLETSL (160 aa)) are cytoplasmic. The segment at 1100 to 1117 (LRRGQILWFRGLNRIQTQ) is calmodulin-binding subdomain A. A Phosphothreonine; by PKC modification is found at Thr-1116. Residues 1118–1127 (IRVVNAFRSS) form a calmodulin-binding subdomain B region. The required for basolateral membrane targeting stretch occupies residues 1118–1220 (IRVVNAFRSS…SPLHSLETSL (103 aa)). Residues Ser-1140 and Ser-1155 each carry the phosphoserine modification. The interval 1160–1220 (PLIDDTDAED…SPLHSLETSL (61 aa)) is disordered. Thr-1165 bears the Phosphothreonine mark. A phosphoserine mark is found at Ser-1178 and Ser-1182. Polar residues predominate over residues 1200-1220 (MNKSATSSSPGSPLHSLETSL).

This sequence belongs to the cation transport ATPase (P-type) (TC 3.A.3) family. Type IIB subfamily. Monomer. Dimer. Oligomer. Calmodulin binding. Interacts with PDZD11. Interacts with SLC35G1 and STIM1. Interacts with YWHAE; interacts with the monomeric and dimeric forms of the YWHAE but prefer the monomer form; this interaction inhibits calcium-transporting ATPase activity. Interacts with NPTN; this interaction stabilizes ATP2B1 and increases ATPase activity; this interaction controls T cell calcium homeostasis following T cell activation. Interacts with EPB41; regulates small intestinal calcium absorption through regulation of membrane expression of ATP2B1.

The protein resides in the cell membrane. The protein localises to the basolateral cell membrane. It localises to the synapse. It is found in the presynaptic cell membrane. Its subcellular location is the cytoplasmic vesicle. The protein resides in the secretory vesicle. The protein localises to the synaptic vesicle membrane. It catalyses the reaction Ca(2+)(in) + ATP + H2O = Ca(2+)(out) + ADP + phosphate + H(+). Catalyzes the hydrolysis of ATP coupled with the transport of calcium from the cytoplasm to the extracellular space thereby maintaining intracellular calcium homeostasis. Plays a role in blood pressure regulation through regulation of intracellular calcium concentration and nitric oxide production leading to regulation of vascular smooth muscle cells vasoconstriction. Positively regulates bone mineralization through absorption of calcium from the intestine. Plays dual roles in osteoclast differentiation and survival by regulating RANKL-induced calcium oscillations in preosteoclasts and mediating calcium extrusion in mature osteoclasts. Regulates insulin sensitivity through calcium/calmodulin signaling pathway by regulating AKT1 activation and NOS3 activation in endothelial cells. May play a role in synaptic transmission by modulating calcium and proton dynamics at the synaptic vesicles. In Sus scrofa (Pig), this protein is Plasma membrane calcium-transporting ATPase 1.